The following is a 329-amino-acid chain: uncharacterized protein (329 aa).

2 coiled-coil regions span residues 57–119 (KKEE…LQEV) and 224–250 (AQRQ…LGNV).

This is an uncharacterized protein from Macaca fascicularis (Crab-eating macaque).